We begin with the raw amino-acid sequence, 370 residues long: A-type ATP synthase subunit C (370 aa).

It belongs to the V-ATPase V0D/AC39 subunit family. Has multiple subunits with at least A(3), B(3), C, D, E, F, H, I and proteolipid K(x).

The protein resides in the cell membrane. Component of the A-type ATP synthase that produces ATP from ADP in the presence of a proton gradient across the membrane. The chain is A-type ATP synthase subunit C from Pyrococcus horikoshii (strain ATCC 700860 / DSM 12428 / JCM 9974 / NBRC 100139 / OT-3).